The sequence spans 66 residues: Toxin Boma6c (66 aa).

The 63-residue stretch at 2-64 (RDAYIAQNYN…VPIRIPGKCH (63 aa)) folds into the LCN-type CS-alpha/beta domain. Intrachain disulfides connect Cys-12/Cys-63, Cys-16/Cys-36, Cys-22/Cys-46, and Cys-26/Cys-48.

Belongs to the long (4 C-C) scorpion toxin superfamily. Sodium channel inhibitor family. Alpha subfamily. As to expression, expressed by the venom gland.

It localises to the secreted. Alpha toxins bind voltage-independently at site-3 of sodium channels (Nav) and inhibit the inactivation of the activated channels, thereby blocking neuronal transmission. This chain is Toxin Boma6c, found in Buthus occitanus mardochei (Moroccan scorpion).